We begin with the raw amino-acid sequence, 255 residues long: Geranylgeranylglyceryl phosphate synthase (255 aa).

2 residues coordinate Mg(2+): aspartate 31 and serine 60. Sn-glycerol 1-phosphate-binding positions include 179–185 (YLEAGSG), 211–212 (GG), and 233–234 (GT).

The protein belongs to the GGGP/HepGP synthase family. Group II subfamily. It depends on Mg(2+) as a cofactor.

It localises to the cytoplasm. The catalysed reaction is sn-glycerol 1-phosphate + (2E,6E,10E)-geranylgeranyl diphosphate = sn-3-O-(geranylgeranyl)glycerol 1-phosphate + diphosphate. It functions in the pathway membrane lipid metabolism; glycerophospholipid metabolism. Its function is as follows. Prenyltransferase that catalyzes the transfer of the geranylgeranyl moiety of geranylgeranyl diphosphate (GGPP) to the C3 hydroxyl of sn-glycerol-1-phosphate (G1P). This reaction is the first ether-bond-formation step in the biosynthesis of archaeal membrane lipids. The chain is Geranylgeranylglyceryl phosphate synthase from Methanothrix thermoacetophila (strain DSM 6194 / JCM 14653 / NBRC 101360 / PT) (Methanosaeta thermophila).